The following is a 493-amino-acid chain: Cysteine--tRNA ligase (493 aa).

Position 31 (Cys-31) interacts with Zn(2+). The 'HIGH' region motif lies at 33 to 43 (PTVYGDAHLGH). 3 residues coordinate Zn(2+): Cys-226, His-251, and Glu-255. Positions 283–287 (KMGKS) match the 'KMSKS' region motif. Residue Lys-286 coordinates ATP.

The protein belongs to the class-I aminoacyl-tRNA synthetase family. As to quaternary structure, monomer. The cofactor is Zn(2+).

It localises to the cytoplasm. It catalyses the reaction tRNA(Cys) + L-cysteine + ATP = L-cysteinyl-tRNA(Cys) + AMP + diphosphate. This Phocaeicola vulgatus (strain ATCC 8482 / DSM 1447 / JCM 5826 / CCUG 4940 / NBRC 14291 / NCTC 11154) (Bacteroides vulgatus) protein is Cysteine--tRNA ligase.